Consider the following 546-residue polypeptide: Sodium/hydrogen exchanger 2 (546 aa).

Topologically, residues 1–21 are cytoplasmic; sequence MTMFASLTSKMLSVSTSDHAS. The chain crosses the membrane as a helical span at residues 22–42; it reads VVSLNLFVALLCACIVIGHLL. Residues 43–47 lie on the Vacuolar side of the membrane; it reads EENRW. Residues 48-68 form a helical membrane-spanning segment; that stretch reads MNESITALLIGLGTGVVILLI. Residues 69-75 lie on the Cytoplasmic side of the membrane; that stretch reads SRGKNSH. The segment at residues 76-96 is an intramembrane region (helical); that stretch reads LLVFSEDLFFIYLLPPIIFNA. Over 97–111 the chain is Cytoplasmic; that stretch reads GFQVKKKQFFRNFVT. Residues 112-132 traverse the membrane as a helical segment; sequence IMAFGAIGTVVSCTIISLGAI. Over 133–148 the chain is Vacuolar; sequence QFFKKLDIGTFDLGDF. 2 intramembrane regions (helical) span residues 149–168 and 174–194; these read LAIGAIFAATDSVCTLQVLN and LLYSLVFGEGVVNDATSVVLF. Topologically, residues 195–218 are vacuolar; that stretch reads NAIQSFDLTHLNHEAAFQFLGNFF. Residues 219-239 form a helical membrane-spanning segment; the sequence is YLFLLSTGLGVATGLISAYVI. Topologically, residues 240-264 are cytoplasmic; sequence KKLYFGRHSTDREVALMMLMAYLSY. Residues 265–285 traverse the membrane as a helical segment; sequence MLAELFALSGILTVFFCGIVM. The Vacuolar segment spans residues 286-304; it reads SHYTWHNVTESSRITTKHA. Asn-292 carries N-linked (GlcNAc...) asparagine glycosylation. Residues 305–325 form a helical membrane-spanning segment; it reads FATLSFLAETFIFLYVGMDAL. Residues 326–344 lie on the Cytoplasmic side of the membrane; sequence DIEKWRFVSDSPGTSVAVS. A helical membrane pass occupies residues 345–365; it reads SILMGLVMLGRAAFVFPLSFL. Residues 366-381 are Vacuolar-facing; sequence SNLAKKHQSEKISIKQ. A helical membrane pass occupies residues 382 to 402; it reads QVVIWWAGLMRGAVSMALAYN. The Cytoplasmic segment spans residues 403–415; that stretch reads KFTRSGHTELRGN. The helical transmembrane segment at 416-436 threads the bilayer; it reads AIMITSTITVCLFSTMVFGML. Over 437 to 546 the chain is Vacuolar; the sequence is TKPLIRYLMP…ERSSHDLSKP (110 aa).

It belongs to the monovalent cation:proton antiporter 1 (CPA1) transporter (TC 2.A.36) family. As to expression, expressed in roots and shoots.

It is found in the vacuole membrane. The catalysed reaction is Na(+)(in) + H(+)(out) = Na(+)(out) + H(+)(in). The enzyme catalyses K(+)(in) + H(+)(out) = K(+)(out) + H(+)(in). Functionally, acts in low affinity electroneutral exchange of protons for cations such as Na(+) or K(+) across membranes. May also exchange Li(+) and Cs(+) with a lower affinity. Involved in vacuolar ion compartmentalization necessary for cell volume regulation and cytoplasmic Na(+) detoxification. The protein is Sodium/hydrogen exchanger 2 (NHX2) of Arabidopsis thaliana (Mouse-ear cress).